The sequence spans 184 residues: Potassium-transporting ATPase KdpC subunit (184 aa).

The chain crosses the membrane as a helical span at residues 10–30 (LTFLMVVLFAVIYPLAIYGIA).

It belongs to the KdpC family. The system is composed of three essential subunits: KdpA, KdpB and KdpC.

Its subcellular location is the cell inner membrane. Its function is as follows. Part of the high-affinity ATP-driven potassium transport (or Kdp) system, which catalyzes the hydrolysis of ATP coupled with the electrogenic transport of potassium into the cytoplasm. This subunit acts as a catalytic chaperone that increases the ATP-binding affinity of the ATP-hydrolyzing subunit KdpB by the formation of a transient KdpB/KdpC/ATP ternary complex. The chain is Potassium-transporting ATPase KdpC subunit from Flavobacterium psychrophilum (strain ATCC 49511 / DSM 21280 / CIP 103535 / JIP02/86).